The chain runs to 184 residues: Probable S-adenosyl-L-methionine-binding protein PYRAB06630 (184 aa).

Residues 9–140 (YRPIGIIHSP…YVPEFDVREN (132 aa)) enclose the TsaA-like domain. Residues 26–28 (PIQ), 65–66 (HR), Arg89, and 120–123 (LDGT) contribute to the S-adenosyl-L-methionine site.

Belongs to the tRNA methyltransferase O family.

This is Probable S-adenosyl-L-methionine-binding protein PYRAB06630 from Pyrococcus abyssi (strain GE5 / Orsay).